The following is a 319-amino-acid chain: Beta-ketoacyl-[acyl-carrier-protein] synthase III (319 aa).

Residues Cys-110 and His-246 contribute to the active site. The ACP-binding stretch occupies residues 247 to 251 (QANYR). The active site involves Asn-276.

Belongs to the thiolase-like superfamily. FabH family. As to quaternary structure, homodimer.

Its subcellular location is the cytoplasm. The enzyme catalyses malonyl-[ACP] + acetyl-CoA + H(+) = 3-oxobutanoyl-[ACP] + CO2 + CoA. It functions in the pathway lipid metabolism; fatty acid biosynthesis. In terms of biological role, catalyzes the condensation reaction of fatty acid synthesis by the addition to an acyl acceptor of two carbons from malonyl-ACP. Catalyzes the first condensation reaction which initiates fatty acid synthesis and may therefore play a role in governing the total rate of fatty acid production. Possesses both acetoacetyl-ACP synthase and acetyl transacylase activities. Its substrate specificity determines the biosynthesis of branched-chain and/or straight-chain of fatty acids. In Lactobacillus delbrueckii subsp. bulgaricus (strain ATCC BAA-365 / Lb-18), this protein is Beta-ketoacyl-[acyl-carrier-protein] synthase III.